The chain runs to 195 residues: Pyridoxal 5'-phosphate synthase subunit PdxT (195 aa).

55–57 serves as a coordination point for L-glutamine; the sequence is GES. The active-site Nucleophile is C84. Residues R111 and 139-140 each bind L-glutamine; that span reads IR. Residues H175 and E177 each act as charge relay system in the active site.

It belongs to the glutaminase PdxT/SNO family. As to quaternary structure, in the presence of PdxS, forms a dodecamer of heterodimers. Only shows activity in the heterodimer.

The catalysed reaction is aldehydo-D-ribose 5-phosphate + D-glyceraldehyde 3-phosphate + L-glutamine = pyridoxal 5'-phosphate + L-glutamate + phosphate + 3 H2O + H(+). It carries out the reaction L-glutamine + H2O = L-glutamate + NH4(+). Its pathway is cofactor biosynthesis; pyridoxal 5'-phosphate biosynthesis. Functionally, catalyzes the hydrolysis of glutamine to glutamate and ammonia as part of the biosynthesis of pyridoxal 5'-phosphate. The resulting ammonia molecule is channeled to the active site of PdxS. This Methanosphaerula palustris (strain ATCC BAA-1556 / DSM 19958 / E1-9c) protein is Pyridoxal 5'-phosphate synthase subunit PdxT.